Consider the following 201-residue polypeptide: Charged multivesicular body protein 6 (201 aa).

A lipid anchor (N-myristoyl glycine) is attached at G2. Residues 10–145 are a coiled coil; sequence QSRVTEQDKA…YQRQIDELLA (136 aa). A Phosphoserine modification is found at S119. T130 carries the phosphothreonine modification. Positions 168–179 match the Type-2 MIT-interacting motif motif; that stretch reads IELPEVPSEPLP. An interaction with VPS4A region spans residues 170–181; the sequence is LPEVPSEPLPEK.

Belongs to the SNF7 family. Probable core component of the endosomal sorting required for transport complex III (ESCRT-III). ESCRT-III components are thought to multimerize to form a flat lattice on the perimeter membrane of the endosome. Several assembly forms of ESCRT-III may exist that interact and act sequentially. Interacts with VPS4A; the interaction is direct. Interacts with VPS4B; the interaction is direct. Interacts with CHMP4A, CHMP4B and CHMP4C. Interacts with SNF8, VPS25 and VPS36. In terms of processing, ISGylated in a CHMP5-dependent manner. Isgylation weakens its interaction with VPS4A. In terms of tissue distribution, ubiquitously expressed.

Its subcellular location is the endomembrane system. It localises to the endosome membrane. It is found in the late endosome membrane. The protein localises to the membrane. In terms of biological role, probable core component of the endosomal sorting required for transport complex III (ESCRT-III) which is involved in multivesicular bodies (MVBs) formation and sorting of endosomal cargo proteins into MVBs. MVBs contain intraluminal vesicles (ILVs) that are generated by invagination and scission from the limiting membrane of the endosome and mostly are delivered to lysosomes enabling degradation of membrane proteins, such as stimulated growth factor receptors, lysosomal enzymes and lipids. The MVB pathway appears to require the sequential function of ESCRT-O, -I,-II and -III complexes. ESCRT-III proteins mostly dissociate from the invaginating membrane before the ILV is released. The ESCRT machinery also functions in topologically equivalent membrane fission events, such as the terminal stages of cytokinesis and the budding of enveloped viruses (HIV-1 and other lentiviruses). ESCRT-III proteins are believed to mediate the necessary vesicle extrusion and/or membrane fission activities, possibly in conjunction with the AAA ATPase VPS4. In the ESCRT-III complex, it probably serves as an acceptor for the ESCRT-II complex on endosomal membranes. In Homo sapiens (Human), this protein is Charged multivesicular body protein 6 (CHMP6).